A 402-amino-acid chain; its full sequence is Deoxyguanosinetriphosphate triphosphohydrolase-like protein (402 aa).

In terms of domain architecture, HD spans 73–217; the sequence is RLTHTIEVAQ…AAIADDIAYN (145 aa).

This sequence belongs to the dGTPase family. Type 2 subfamily.

The protein is Deoxyguanosinetriphosphate triphosphohydrolase-like protein of Brucella suis (strain ATCC 23445 / NCTC 10510).